The chain runs to 82 residues: Three-finger toxin MicTx3 (82 aa).

Residues 1–21 form the signal peptide; that stretch reads MKTLLLTLVVVTIMCLDLGYT. 4 disulfide bridges follow: C24–C44, C38–C59, C63–C74, and C75–C80.

It belongs to the three-finger toxin family. Short-chain subfamily. In terms of tissue distribution, expressed by the venom gland.

It localises to the secreted. In terms of biological role, has been described to inhibit nicotinic acetylcholine receptor (nAChR) alpha-7/CHRNA7 subunits and to bind acetylcholine binding protein (AChBP) (Kd=29.5 nM). This Micrurus corallinus (Brazilian coral snake) protein is Three-finger toxin MicTx3.